Here is a 231-residue protein sequence, read N- to C-terminus: Casein kinase II subunit beta (231 aa).

This sequence belongs to the casein kinase 2 subunit beta family. As to quaternary structure, tetramer composed of two alpha chains, one beta chain and one beta' chain. Post-translationally, phosphorylated by alpha subunit.

Its function is as follows. Regulatory subunit of casein kinase II/CK2. As part of the kinase complex regulates the basal catalytic activity of the alpha subunit a constitutively active serine/threonine-protein kinase that phosphorylates a large number of substrates containing acidic residues C-terminal to the phosphorylated serine or threonine. The sequence is that of Casein kinase II subunit beta from Schizosaccharomyces pombe (strain 972 / ATCC 24843) (Fission yeast).